A 151-amino-acid polypeptide reads, in one-letter code: Aspartate carbamoyltransferase regulatory chain (151 aa).

4 residues coordinate Zn(2+): C108, C113, C138, and C141.

This sequence belongs to the PyrI family. Contains catalytic and regulatory chains. Zn(2+) serves as cofactor.

In terms of biological role, involved in allosteric regulation of aspartate carbamoyltransferase. The protein is Aspartate carbamoyltransferase regulatory chain of Pyrobaculum arsenaticum (strain DSM 13514 / JCM 11321 / PZ6).